Reading from the N-terminus, the 32-residue chain is Phallacidin proprotein (32 aa).

Residues 1–10 (MSDINATRLP) constitute a propeptide that is removed on maturation. The segment at residues 11–17 (AWLVDCP) is a cross-link (cyclopeptide (Ala-Pro)). A cross-link (2'-cysteinyl-6'-hydroxytryptophan sulfoxide (Trp-Cys)) is located at residues 12-16 (WLVDC). Positions 18–32 (CVGDDINRLLTRGEK) are excised as a propeptide.

It belongs to the MSDIN fungal toxin family. Post-translationally, processed by the macrocyclase-peptidase enzyme POPB to yield a toxic cyclic heptapeptide. POPB first removes 10 residues from the N-terminus. Conformational trapping of the remaining peptide forces the enzyme to release this intermediate rather than proceed to macrocyclization. The enzyme rebinds the remaining peptide in a different conformation and catalyzes macrocyclization of the N-terminal 7 residues.

Its function is as follows. Major toxin that belongs to the bicyclic heptapeptides called phallotoxins. Although structurally related to amatoxins, phallotoxins have a different mode of action, which is the stabilization of F-actin. Phallotoxins are poisonous when administered parenterally, but not orally because of poor absorption. The sequence is that of Phallacidin proprotein from Amanita pallidorosea.